Reading from the N-terminus, the 112-residue chain is Large ribosomal subunit protein bL17 (112 aa).

Belongs to the bacterial ribosomal protein bL17 family. As to quaternary structure, part of the 50S ribosomal subunit. Contacts protein L32.

The sequence is that of Large ribosomal subunit protein bL17 from Thermoanaerobacter pseudethanolicus (strain ATCC 33223 / 39E) (Clostridium thermohydrosulfuricum).